The chain runs to 140 residues: D-ribose pyranase (140 aa).

His-20 functions as the Proton donor in the catalytic mechanism. Substrate is bound by residues Asp-28, His-99, and 121–123; that span reads YSS.

It belongs to the RbsD / FucU family. RbsD subfamily. As to quaternary structure, homodecamer.

Its subcellular location is the cytoplasm. It carries out the reaction beta-D-ribopyranose = beta-D-ribofuranose. It participates in carbohydrate metabolism; D-ribose degradation; D-ribose 5-phosphate from beta-D-ribopyranose: step 1/2. In terms of biological role, catalyzes the interconversion of beta-pyran and beta-furan forms of D-ribose. The sequence is that of D-ribose pyranase from Pseudothermotoga lettingae (strain ATCC BAA-301 / DSM 14385 / NBRC 107922 / TMO) (Thermotoga lettingae).